Consider the following 401-residue polypeptide: Patatin-like protein 4 (401 aa).

The PNPLA domain occupies leucine 17–methionine 218. Residues glycine 21 to glycine 26 carry the GXGXXG motif. The GXSXG signature appears at glycine 60–glycine 64. Serine 62 functions as the Nucleophile in the catalytic mechanism. Residue aspartate 205 is the Proton acceptor of the active site. The DGA/G signature appears at aspartate 205–glycine 207.

Belongs to the patatin family.

In terms of biological role, possesses non-specific lipolytic acyl hydrolase (LAH) activity. Hydrolyzes phospholipids as well as galactolipids. May play a role in disease resistance. The sequence is that of Patatin-like protein 4 (PLP4) from Arabidopsis thaliana (Mouse-ear cress).